Consider the following 429-residue polypeptide: MKRAIIVGGGLAGGLTAIYLAKRGYEVHVVEKRGDPLRDLSSYVDVVSSRAIGVSMTVRGIKSVLAAGIPRAELDACGEPIVAMAFSVGGQYRMRELKPLEDFRPLSLNRAAFQKLLNKYANLAGVRYYFEHKCLDVDLDGKSVLIQGKDGQPQRLQGDMIIGADGAHSAVRQAMQSGLRRFEFQQTFFRHGYKTLVLPDAQALGYRKDTLYFFGMDSGGLFAGRAATIPDGSVSIAVCLPYSGSPSLTTTDEPTMRAFFDRYFGGLPRDARDEMLRQFLAKPSNDLINVRSSTFHYKGNVLLLGDAAHATAPFLGQGMNMALEDARTFVELLDRHQGDQDKAFPEFTELRKVQADAMQDMARANYDVLSCSNPIFFMRARYTRYMHSKFPGLYPPDMAEKLYFTSEPYDRLQQIQRKQNVWYKIGRVN.

Residue 3–21 (RAIIVGGGLAGGLTAIYLA) coordinates FAD.

FAD is required as a cofactor.

The catalysed reaction is protoviolaceinate + NADPH + O2 + H(+) = violaceinate + NADP(+) + H2O. The enzyme catalyses protoviolaceinate + NADH + O2 + H(+) = violaceinate + NAD(+) + H2O. It catalyses the reaction protodeoxyviolaceinate + NADPH + O2 + H(+) = deoxyviolaceinate + NADP(+) + H2O. It carries out the reaction protodeoxyviolaceinate + NADH + O2 + H(+) = deoxyviolaceinate + NAD(+) + H2O. The protein operates within pigment biosynthesis; violacein biosynthesis. Catalyzes the hydroxylation of the 16-position of protoviolaceinate and protodeoxyviolaceinate to form violacein and deoxyviolacein, respectively. The chain is Violacein synthase (vioC) from Chromobacterium violaceum (strain ATCC 12472 / DSM 30191 / JCM 1249 / CCUG 213 / NBRC 12614 / NCIMB 9131 / NCTC 9757 / MK).